The chain runs to 767 residues: Protein ROLLING AND ERECT LEAF 2 (767 aa).

3 disordered regions span residues 1 to 20 (MGCT…CKER), 78 to 187 (PALA…SEFF), and 201 to 309 (RELE…SSTV). Pro residues-rich tracts occupy residues 81–90 (APTPTPPPPS) and 110–126 (APPP…PPPV). The segment covering 145 to 155 (SDSSVASPARS) has biased composition (low complexity). Positions 201 to 210 (RELEEEEKAR) are enriched in basic and acidic residues. The segment covering 221–232 (EDEVDDDDDERE) has biased composition (acidic residues). Residues 255-264 (TRSEEGEMGN) show a composition bias toward basic and acidic residues.

As to expression, highly expressed in young leaves and panicles. Expressed at low levels in roots.

Its subcellular location is the cell membrane. Its function is as follows. Involved in the regulation of leaf shape formation. May function by coordinating the expression of genes associated with leaf and bulliform cell development. The polypeptide is Protein ROLLING AND ERECT LEAF 2 (Oryza sativa subsp. japonica (Rice)).